The sequence spans 612 residues: UvrABC system protein C (612 aa).

Residues 20–98 (THSGVYRMLD…IKQHRPKYNI (79 aa)) enclose the GIY-YIG domain. One can recognise a UVR domain in the interval 208–243 (STVLEEISAKMYQASEDMEYEKAQVYRDQLVVLRKL).

It belongs to the UvrC family. In terms of assembly, interacts with UvrB in an incision complex.

It localises to the cytoplasm. Functionally, the UvrABC repair system catalyzes the recognition and processing of DNA lesions. UvrC both incises the 5' and 3' sides of the lesion. The N-terminal half is responsible for the 3' incision and the C-terminal half is responsible for the 5' incision. The chain is UvrABC system protein C from Francisella tularensis subsp. novicida (strain U112).